The chain runs to 362 residues: Type-2 angiotensin II receptor (362 aa).

Residues 1–44 (MKANFSLATISKNITSSLHVGFVNISSNESTFNCSHKPSDKHLD) lie on the Extracellular side of the membrane. Asn-4, Asn-13, Asn-24, Asn-28, and Asn-33 each carry an N-linked (GlcNAc...) asparagine glycan. Cystine bridges form between Cys-34/Cys-289 and Cys-116/Cys-194. The helical transmembrane segment at 45–69 (AIPVLYYIIFGVGFLVNTIVVTLFC) threads the bilayer. Residues 70–79 (CQKGPKKVSS) are Cytoplasmic-facing. The helical transmembrane segment at 80-103 (IYIFNLAVADLLLLATLPLWATYY) threads the bilayer. The angiotensin II site is built by Tyr-102 and Tyr-103. At 104–113 (SHRYDWIFGP) the chain is on the extracellular side. A helical transmembrane segment spans residues 114 to 139 (VMCKVFGSFLTLNMFASIFFITCMSV). Residues 140–158 (DRYQSVIYPFLSQRRNPWQ) lie on the Cytoplasmic side of the membrane. The helical transmembrane segment at 159 to 180 (ASYIVPLVWCMACLSSLPTFYF) threads the bilayer. Residues Arg-181, Tyr-203, and Lys-214 each coordinate angiotensin II. At 181-205 (RDVRTIEYLGVNACIMAFPPEKYAQ) the chain is on the extracellular side. The helical transmembrane segment at 206–231 (WSAGIALMKNILGFIIPLIFIATCYF) threads the bilayer. At 232-256 (GIRKHLLKTNSYGKNRITRDQVLKM) the chain is on the cytoplasmic side. A helical membrane pass occupies residues 257–280 (AAAVVLAFIICWLPFHVLTFLDAL). Residue Asp-278 participates in angiotensin II binding. Residues 281 to 293 (AWMGVINSCEVIA) lie on the Extracellular side of the membrane. Residues 294–319 (VIDLALPFAILLGFTNSCINPFLYCF) traverse the membrane as a helical segment. Asp-296 is a binding site for angiotensin II. The Cytoplasmic portion of the chain corresponds to 320–362 (VGNRFQQKLRRVFRVPITWLQGKRENGSCGKSSSFREMETFVS). Residues 323–332 (RFQQKLRRVF) are helix VIII.

It belongs to the G-protein coupled receptor 1 family. Interacts with MTUS1.

It is found in the cell membrane. Receptor for angiotensin II, a vasoconstricting peptide. Signals primarily via a non-canonical G-protein- and beta-arrestin independent pathways. Cooperates with MTUS1 to inhibit ERK2 activation and cell proliferation. This Ovis aries (Sheep) protein is Type-2 angiotensin II receptor (AGTR2).